Consider the following 90-residue polypeptide: Small ribosomal subunit protein uS17 (90 aa).

It belongs to the universal ribosomal protein uS17 family. In terms of assembly, part of the 30S ribosomal subunit.

In terms of biological role, one of the primary rRNA binding proteins, it binds specifically to the 5'-end of 16S ribosomal RNA. This chain is Small ribosomal subunit protein uS17, found in Dehalococcoides mccartyi (strain ATCC BAA-2100 / JCM 16839 / KCTC 5957 / BAV1).